The primary structure comprises 353 residues: Putative glycosyltransferase TagX (353 aa).

The protein belongs to the glycosyltransferase 2 family.

This Staphylococcus aureus (strain Mu50 / ATCC 700699) protein is Putative glycosyltransferase TagX (tagX).